A 232-amino-acid chain; its full sequence is Probable transcriptional regulatory protein Bd1964 (232 aa).

This sequence belongs to the TACO1 family.

Its subcellular location is the cytoplasm. This chain is Probable transcriptional regulatory protein Bd1964, found in Bdellovibrio bacteriovorus (strain ATCC 15356 / DSM 50701 / NCIMB 9529 / HD100).